A 499-amino-acid polypeptide reads, in one-letter code: Probable malate:quinone oxidoreductase 4 (499 aa).

Belongs to the MQO family. Requires FAD as cofactor.

It carries out the reaction (S)-malate + a quinone = a quinol + oxaloacetate. It functions in the pathway carbohydrate metabolism; tricarboxylic acid cycle; oxaloacetate from (S)-malate (quinone route): step 1/1. The chain is Probable malate:quinone oxidoreductase 4 from Staphylococcus epidermidis (strain ATCC 35984 / DSM 28319 / BCRC 17069 / CCUG 31568 / BM 3577 / RP62A).